The chain runs to 591 residues: Parathyroid hormone/parathyroid hormone-related peptide receptor (591 aa).

The N-terminal stretch at 1–26 (MGAARIAPSLALLLCCPVLSSAYALV) is a signal peptide. Over 27 to 188 (DADDVFTKEE…REREVFDRLG (162 aa)) the chain is Extracellular. Intrachain disulfides connect C48–C117, C108–C148, and C131–C170. The tract at residues 67-104 (KGWTPASTSGKPRKEKASGKFYPESKENKDVPTGSRRR) is disordered. Basic and acidic residues predominate over residues 81–96 (EKASGKFYPESKENKD). Residues N151, N161, N166, and N176 are each glycosylated (N-linked (GlcNAc...) asparagine). A helical membrane pass occupies residues 189–212 (MIYTVGYSMSLASLTVAVLILAYF). Topologically, residues 213–219 (RRLHCTR) are cytoplasmic. Residues 220–239 (NYIHMHMFLSFMLRAASIFV) traverse the membrane as a helical segment. The Extracellular segment spans residues 240 to 282 (KDAVLYSGFTLDEAERLTEEELHIIAQVPPPPAAAAVGYAGCR). A helical transmembrane segment spans residues 283–306 (VAVTFFLYFLATNYYWILVEGLYL). Topologically, residues 307–320 (HSLIFMAFFSEKKY) are cytoplasmic. Residues 321-342 (LWGFTIFGWGLPAVFVAVWVGV) form a helical membrane-spanning segment. Residues 343-361 (RATLANTGCWDLSSGHKKW) lie on the Extracellular side of the membrane. A helical membrane pass occupies residues 362 to 382 (IIQVPILASVVLNFILFINII). At 383-409 (RVLATKLRETNAGRCDTRQQYRKLLRS) the chain is on the cytoplasmic side. A helical membrane pass occupies residues 410–428 (TLVLVPLFGVHYTVFMALP). At 429-440 (YTEVSGTLWQIQ) the chain is on the extracellular side. A helical transmembrane segment spans residues 441–463 (MHYEMLFNSFQGFFVAIIYCFCN). The Cytoplasmic segment spans residues 464–591 (GEVQAEIRKS…LLQEEWETVM (128 aa)). An Important for interaction with G proteins motif is present at residues 474 to 477 (WSRW). The tract at residues 516 to 544 (LPLSPRLPPATTNGHSQLPGHAKPGAPAT) is disordered.

This sequence belongs to the G-protein coupled receptor 2 family. Homodimer in the absence of bound ligand. Peptide hormone binding leads to dissociation of the homodimer. Post-translationally, N-glycosylated.

Its subcellular location is the cell membrane. Functionally, G-protein-coupled receptor for parathyroid hormone (PTH) and for parathyroid hormone-related peptide (PTHLH). Ligand binding causes a conformation change that triggers signaling via guanine nucleotide-binding proteins (G proteins) and modulates the activity of downstream effectors, such as adenylate cyclase (cAMP). PTH1R is coupled to G(s) G alpha proteins and mediates activation of adenylate cyclase activity. PTHLH dissociates from PTH1R more rapidly than PTH; as consequence, the cAMP response induced by PTHLH decays faster than the response induced by PTH. This is Parathyroid hormone/parathyroid hormone-related peptide receptor (Pth1r) from Rattus norvegicus (Rat).